A 309-amino-acid polypeptide reads, in one-letter code: Protein FdhE (309 aa).

The protein belongs to the FdhE family.

The protein localises to the cytoplasm. Necessary for formate dehydrogenase activity. This is Protein FdhE from Escherichia coli O9:H4 (strain HS).